The primary structure comprises 594 residues: MKIRSPIVSVLGHVDHGKTTLLDHIRGSAVASREAGGITQHIGATEIPMDVIEGICGDFLKKFSIRETLPGLFFIDTPGHEAFTTLRKRGGALADLAILIVDINEGFKPQTQEALNILRMYRTPFVVAANKIDRIHGWRVHEGRPFMETFSKQDIQVQQKLDTKVYELVGKLHEEGFESERFDRVTDFASQVSIIPISAITGEGIPELLTMLMGLAQQYLREQLKIEEDSPARGTILEVKEETGLGMTIDAVIYDGILRKDDTIAMMTSKDVISTRIRSLLKPRPLEEMRESRKKFQKVDEVVAAAGIKIVAPGIDDVMAGSPLRVVTDPEKVREEILSEIEDIKIDTDEAGVVVKADTLGSLEAVVKILRDMYVPIKVADIGDVSRRDVVNAGIALQEDRVYGAIIAFNVKVIPSAAQELKNSDIKLFQGNVIYRLMEEYEEWVRGIEEEKKKKWMEAIIKPASIRLIPKLVFRQSKPAIGGVEVLTGVIRQGYPLMNDDGETVGTVESMQDKGENLKSASRGQKVAMAIKDAVYGKTIHEGDTLYVDIPENHYHILKEQLSGDLTDEELDLMDKIAEIKRKKNPDWGMKAPF.

Residues 3–220 (IRSPIVSVLG…MLMGLAQQYL (218 aa)) enclose the tr-type G domain. The G1 stretch occupies residues 12-19 (GHVDHGKT). 12-19 (GHVDHGKT) is a binding site for GTP. The interval 37-41 (GITQH) is G2. Residues 76-79 (DTPG) form a G3 region. Residues 76–80 (DTPGH) and 130–133 (NKID) each bind GTP. The G4 stretch occupies residues 130 to 133 (NKID). The interval 198 to 200 (SAI) is G5.

It belongs to the TRAFAC class translation factor GTPase superfamily. Classic translation factor GTPase family. IF-2 subfamily.

Functionally, function in general translation initiation by promoting the binding of the formylmethionine-tRNA to ribosomes. Seems to function along with eIF-2. The protein is Probable translation initiation factor IF-2 (infB) of Methanothermobacter thermautotrophicus (strain ATCC 29096 / DSM 1053 / JCM 10044 / NBRC 100330 / Delta H) (Methanobacterium thermoautotrophicum).